Reading from the N-terminus, the 291-residue chain is Small ribosomal subunit protein uS2 (291 aa).

A disordered region spans residues 256-291 (LRGEGTAPAASEEQPAEEPAPAAAEAQTDAAVGTAV). A compositionally biased stretch (low complexity) spans 261-291 (TAPAASEEQPAEEPAPAAAEAQTDAAVGTAV).

This sequence belongs to the universal ribosomal protein uS2 family.

This Frankia alni (strain DSM 45986 / CECT 9034 / ACN14a) protein is Small ribosomal subunit protein uS2.